The following is a 677-amino-acid chain: MNGVEVPAKIQKRIERLRQEINDHNYRYYVLSQPTIPDSVYDELFHELQKLEKKYPETITPSSPTQRVGAEPLKVFEPVHHEIPMLSLDNVFDEKGLRAFDKRIRQRLKLDKPFEYVCEPKMDGVALSLLYENGELIRAATRGDGYTGENVTQNTRTIASVPLQLRGNDYPELVEIRGEVLMPREGFAKFNREAEKRGDKTFANPRNAASGSLRQLDPRITAKRPLIFYGYLIGLLKGKDFPKNHCDVLKWFKDWGIPVISEIKVVGGIEGCLDYYEHLVKTREKMPFDIDGIVIKVNSLQVQAELGFVSRAPRWAIAYKFPAQEKMTVVKAIEFQVGRTGAVTPVARLEPVSVSGVTVSNATLHNFDELYRKDVRVGDTVIVRRAGDVIPEVVGPILAKRPKKAKLIKIPSRCPVCHAEVIKPEGEAVARCVGGLYCRAQLRESIKHFASRRALDIEGLGDKLVELFIQEKLIKDITGIYQLKKSAITALPRMGEKSAENLLTAIEKSKKTTLPRFLYALGIRGVGDTTARTLARHFHELDLLMKASIETLQEIRDIGPVAAENIHAFFHQKHNAELINKLIHLGVHWPQEKAVVKSEIAGKTFVLTGALKSLTREEAEEKIERSGGKATSSVSKNTDYVIVGENPGSKYEKAKALGISLIDEEAFLKLLKSKGVF.

NAD(+)-binding positions include 38–42, 87–88, and E119; these read DSVYD and SL. K121 serves as the catalytic N6-AMP-lysine intermediate. Residues R142, E179, K296, and K320 each coordinate NAD(+). Zn(2+)-binding residues include C414, C417, C432, and C438. The 83-residue stretch at 595 to 677 folds into the BRCT domain; that stretch reads VVKSEIAGKT…LKLLKSKGVF (83 aa).

This sequence belongs to the NAD-dependent DNA ligase family. LigA subfamily. Mg(2+) is required as a cofactor. Requires Mn(2+) as cofactor.

The catalysed reaction is NAD(+) + (deoxyribonucleotide)n-3'-hydroxyl + 5'-phospho-(deoxyribonucleotide)m = (deoxyribonucleotide)n+m + AMP + beta-nicotinamide D-nucleotide.. Functionally, DNA ligase that catalyzes the formation of phosphodiester linkages between 5'-phosphoryl and 3'-hydroxyl groups in double-stranded DNA using NAD as a coenzyme and as the energy source for the reaction. It is essential for DNA replication and repair of damaged DNA. This Coxiella burnetii (strain CbuG_Q212) (Coxiella burnetii (strain Q212)) protein is DNA ligase.